Reading from the N-terminus, the 820-residue chain is Scavenger receptor class F member 1 (820 aa).

The signal sequence occupies residues 1-23 (MLAAMGLELVFSLLLLWTQGTQG). The Extracellular segment spans residues 24-422 (STLDPAGQHV…TCQLGRHGKN (399 aa)). 4 consecutive EGF-like domains span residues 56–90 (TIPI…AQCS), 98–133 (WGHD…RLCE), 163–193 (RRPC…RRCS), and 217–251 (WGPE…IRCE). Intrachain disulfides connect cysteine 60/cysteine 72, cysteine 66/cysteine 78, cysteine 80/cysteine 89, cysteine 102/cysteine 114, cysteine 108/cysteine 121, cysteine 123/cysteine 132, cysteine 166/cysteine 174, cysteine 168/cysteine 181, cysteine 183/cysteine 192, cysteine 221/cysteine 232, cysteine 225/cysteine 239, and cysteine 241/cysteine 250. N-linked (GlcNAc...) asparagine glycosylation occurs at asparagine 291. 2 EGF-like domains span residues 304-341 (FGER…HRCE) and 353-384 (CSST…TSCN). A helical membrane pass occupies residues 423–443 (ALIVGILVPLLLLLMGIVCCA). The Cytoplasmic segment spans residues 444–820 (YCCSGTRLDP…VVPMSVPPQH (377 aa)). 2 disordered regions span residues 549 to 685 (PMAQ…IQES) and 715 to 820 (NYQK…PPQH). A phosphoserine mark is found at serine 590 and serine 607. The span at 631 to 648 (QEAEESTGPEQVNTEEDA) shows a compositional bias: acidic residues. Polar residues predominate over residues 650–662 (TATSSGDPATSHG).

In terms of assembly, heterophilic interaction with SREC2 via its extracellular domain. The heterophilic interaction is suppressed by the presence of ligand such as Ac-LDL. Interacts with AVIL; the interaction occurs in embryonic dorsal root ganglions at 18 dpc and induces neurite-like outgrowth. In terms of tissue distribution, expressed weakly in brain, spinal cord and dorsal root ganglions.

It localises to the membrane. Mediates the binding and degradation of acetylated low density lipoprotein (Ac-LDL). Mediates heterophilic interactions, suggesting a function as adhesion protein. Plays a role in the regulation of neurite-like outgrowth. This is Scavenger receptor class F member 1 (Scarf1) from Mus musculus (Mouse).